Consider the following 262-residue polypeptide: uncharacterized protein (262 aa).

7 helical membrane passes run 42–62, 71–91, 115–135, 145–165, 185–205, 206–226, and 235–255; these read IAKF…TVLN, IINI…LLYF, IGLA…MELI, VVSY…CCFN, LWAY…YSNH, PLMI…PFMI, and AYPS…NYAI.

It is found in the membrane. This is an uncharacterized protein from Acanthamoeba polyphaga mimivirus (APMV).